The primary structure comprises 159 residues: 2-C-methyl-D-erythritol 2,4-cyclodiphosphate synthase (159 aa).

The a divalent metal cation site is built by Asp-8 and His-10. Residues 8 to 10 (DVH) and 34 to 35 (HS) each bind 4-CDP-2-C-methyl-D-erythritol 2-phosphate. Residue His-42 coordinates a divalent metal cation. 4-CDP-2-C-methyl-D-erythritol 2-phosphate contacts are provided by residues 56–58 (DIG), 61–65 (FPDTD), 100–106 (AQAPKML), 132–135 (TTTE), Phe-139, and Arg-142.

This sequence belongs to the IspF family. In terms of assembly, homotrimer. A divalent metal cation serves as cofactor.

The catalysed reaction is 4-CDP-2-C-methyl-D-erythritol 2-phosphate = 2-C-methyl-D-erythritol 2,4-cyclic diphosphate + CMP. The protein operates within isoprenoid biosynthesis; isopentenyl diphosphate biosynthesis via DXP pathway; isopentenyl diphosphate from 1-deoxy-D-xylulose 5-phosphate: step 4/6. In terms of biological role, involved in the biosynthesis of isopentenyl diphosphate (IPP) and dimethylallyl diphosphate (DMAPP), two major building blocks of isoprenoid compounds. Catalyzes the conversion of 4-diphosphocytidyl-2-C-methyl-D-erythritol 2-phosphate (CDP-ME2P) to 2-C-methyl-D-erythritol 2,4-cyclodiphosphate (ME-CPP) with a corresponding release of cytidine 5-monophosphate (CMP). In Salmonella dublin (strain CT_02021853), this protein is 2-C-methyl-D-erythritol 2,4-cyclodiphosphate synthase.